The primary structure comprises 707 residues: DNA ligase (707 aa).

Residues M1–A23 are disordered. NAD(+) contacts are provided by residues D53–D57, S103–L104, and E133. The active-site N6-AMP-lysine intermediate is the K135. NAD(+) is bound by residues R156, E196, K315, and K339. 4 residues coordinate Zn(2+): C433, C436, C452, and C458. The 86-residue stretch at S622–S707 folds into the BRCT domain.

The protein belongs to the NAD-dependent DNA ligase family. LigA subfamily. Mg(2+) serves as cofactor. The cofactor is Mn(2+).

It carries out the reaction NAD(+) + (deoxyribonucleotide)n-3'-hydroxyl + 5'-phospho-(deoxyribonucleotide)m = (deoxyribonucleotide)n+m + AMP + beta-nicotinamide D-nucleotide.. DNA ligase that catalyzes the formation of phosphodiester linkages between 5'-phosphoryl and 3'-hydroxyl groups in double-stranded DNA using NAD as a coenzyme and as the energy source for the reaction. It is essential for DNA replication and repair of damaged DNA. The protein is DNA ligase of Mycolicibacterium vanbaalenii (strain DSM 7251 / JCM 13017 / BCRC 16820 / KCTC 9966 / NRRL B-24157 / PYR-1) (Mycobacterium vanbaalenii).